The primary structure comprises 213 residues: Adenylate kinase (213 aa).

10–15 contacts ATP; the sequence is GAGKGT. The NMP stretch occupies residues 30 to 59; the sequence is STGDMFRAAMANQTEMGLLAKSYIDKGDLV. AMP is bound by residues Thr-31, Arg-36, 57–59, 86–89, and Gln-93; these read DLV and GYPR. An LID region spans residues 127-160; it reads GRIIHKKTGETFHKIFNPPAGDYDENDYYQREDD. ATP contacts are provided by residues Arg-128 and 137–138; that span reads TF. The AMP site is built by Arg-157 and Arg-168. Gln-196 is an ATP binding site.

It belongs to the adenylate kinase family. As to quaternary structure, monomer.

It localises to the cytoplasm. The enzyme catalyses AMP + ATP = 2 ADP. Its pathway is purine metabolism; AMP biosynthesis via salvage pathway; AMP from ADP: step 1/1. Functionally, catalyzes the reversible transfer of the terminal phosphate group between ATP and AMP. Plays an important role in cellular energy homeostasis and in adenine nucleotide metabolism. The sequence is that of Adenylate kinase from Streptococcus uberis (strain ATCC BAA-854 / 0140J).